The following is a 423-amino-acid chain: Histidine--tRNA ligase (423 aa).

Belongs to the class-II aminoacyl-tRNA synthetase family. Homodimer.

It localises to the cytoplasm. The catalysed reaction is tRNA(His) + L-histidine + ATP = L-histidyl-tRNA(His) + AMP + diphosphate + H(+). This Prochlorococcus marinus (strain MIT 9211) protein is Histidine--tRNA ligase.